The sequence spans 1093 residues: ATP-dependent helicase/deoxyribonuclease subunit B (1093 aa).

Belongs to the helicase family. AddB/RexB type 2 subfamily. As to quaternary structure, heterodimer of AddA and RexB. Requires Mg(2+) as cofactor.

The heterodimer acts as both an ATP-dependent DNA helicase and an ATP-dependent, dual-direction single-stranded exonuclease. Recognizes the chi site generating a DNA molecule suitable for the initiation of homologous recombination. This subunit has 5' -&gt; 3' nuclease activity but not helicase activity. The polypeptide is ATP-dependent helicase/deoxyribonuclease subunit B (Streptococcus sanguinis (strain SK36)).